A 316-amino-acid polypeptide reads, in one-letter code: Ribosomal protein L11 methyltransferase (316 aa).

4 residues coordinate S-adenosyl-L-methionine: threonine 161, glycine 182, aspartate 204, and asparagine 249.

This sequence belongs to the methyltransferase superfamily. PrmA family.

Its subcellular location is the cytoplasm. It carries out the reaction L-lysyl-[protein] + 3 S-adenosyl-L-methionine = N(6),N(6),N(6)-trimethyl-L-lysyl-[protein] + 3 S-adenosyl-L-homocysteine + 3 H(+). Methylates ribosomal protein L11. In Ruminiclostridium cellulolyticum (strain ATCC 35319 / DSM 5812 / JCM 6584 / H10) (Clostridium cellulolyticum), this protein is Ribosomal protein L11 methyltransferase.